A 227-amino-acid polypeptide reads, in one-letter code: Translation initiation factor 6 (227 aa).

This sequence belongs to the eIF-6 family.

In terms of biological role, binds to the 50S ribosomal subunit and prevents its association with the 30S ribosomal subunit to form the 70S initiation complex. The chain is Translation initiation factor 6 from Methanococcus maripaludis (strain C5 / ATCC BAA-1333).